The sequence spans 653 residues: Macrolide export ATP-binding/permease protein MacB (653 aa).

Residues 6-244 (LQLTRVTRRF…DAAPDASGGA (239 aa)) enclose the ABC transporter domain. 42–49 (GASGSGKS) is an ATP binding site. The next 4 helical transmembrane spans lie at 278–298 (LLTMLGIIIGITSVVSIVAIG), 526–546 (LTLLLSLIAVISLVVGGIGVM), 587–607 (MGGAIGIVLSFGMSFVFSLFV), and 616–636 (AASIASAFLCSTLIGVVFGFM).

The protein belongs to the ABC transporter superfamily. Macrolide exporter (TC 3.A.1.122) family. As to quaternary structure, homodimer.

It localises to the cell inner membrane. Functionally, non-canonical ABC transporter that contains transmembrane domains (TMD), which form a pore in the inner membrane, and an ATP-binding domain (NBD), which is responsible for energy generation. Confers resistance against macrolides. The polypeptide is Macrolide export ATP-binding/permease protein MacB (Burkholderia pseudomallei (strain 1710b)).